The primary structure comprises 538 residues: Putative outer membrane porin BglH (538 aa).

The signal sequence occupies residues 1-25 (MFRRNLITSAILLMAPLAFSAQSLA). Residues 52–82 (KDEEKKKYTPATVNRSVSTNDQGYAANPFPT) form a disordered region. Residues 62 to 73 (ATVNRSVSTNDQ) are compositionally biased toward polar residues.

It belongs to the porin LamB (TC 1.B.3) family.

The protein localises to the cell outer membrane. In terms of biological role, may be a sugar porin with a broad carbohydrate specificity. In Shigella flexneri serotype 5b (strain 8401), this protein is Putative outer membrane porin BglH (bglH).